The chain runs to 474 residues: Protein NAR1 (474 aa).

The [4Fe-4S] cluster site is built by C24, C61, C64, C67, C177, C233, C390, and C394.

Belongs to the NARF family. Part of a complex composed of AE7, CIA1, MMS19 and NAR1. Interacts with CIA1. As to expression, expressed in developing tissues, including shoot apex, young leaves, vascular tissues, root tips, pedicels, carpels and developing seeds.

The protein localises to the nucleus. It is found in the cytoplasm. Functionally, essential component of the cytosolic iron-sulfur (Fe-S) protein assembly (CIA) machinery. Required for the maturation of extramitochondrial Fe/S proteins. Required for expression of the imprinted FWA gene, for seed development and is involved in the oxidative stress response in vegetative tissues. Involved in the regulation of cell size, ploidy and cell cycle progression. Required for growth under normoxic conditions and necessary for recovery after hypoxic treatment but its action is reactive oxygen species (ROS) independent. The polypeptide is Protein NAR1 (Arabidopsis thaliana (Mouse-ear cress)).